A 445-amino-acid polypeptide reads, in one-letter code: Phosphoglucosamine mutase (445 aa).

Catalysis depends on S99, which acts as the Phosphoserine intermediate. S99, D242, D244, and D246 together coordinate Mg(2+). Position 99 is a phosphoserine (S99).

This sequence belongs to the phosphohexose mutase family. Requires Mg(2+) as cofactor. In terms of processing, activated by phosphorylation.

The enzyme catalyses alpha-D-glucosamine 1-phosphate = D-glucosamine 6-phosphate. Its function is as follows. Catalyzes the conversion of glucosamine-6-phosphate to glucosamine-1-phosphate. This Nitratiruptor sp. (strain SB155-2) protein is Phosphoglucosamine mutase.